Reading from the N-terminus, the 428-residue chain is tRNA modification GTPase MnmE (428 aa).

R20, E76, and R116 together coordinate (6S)-5-formyl-5,6,7,8-tetrahydrofolate. One can recognise a TrmE-type G domain in the interval 212–351; sequence GFEVAIVGAP…LVAAIGERLL (140 aa). N222 is a K(+) binding site. GTP is bound by residues 222–227, 241–247, and 266–269; these read NAGKST, SEIAGTT, and DTAG. S226 is a binding site for Mg(2+). 3 residues coordinate K(+): S241, I243, and T246. Residue T247 participates in Mg(2+) binding. (6S)-5-formyl-5,6,7,8-tetrahydrofolate is bound at residue K428.

It belongs to the TRAFAC class TrmE-Era-EngA-EngB-Septin-like GTPase superfamily. TrmE GTPase family. In terms of assembly, homodimer. Heterotetramer of two MnmE and two MnmG subunits. It depends on K(+) as a cofactor.

It is found in the cytoplasm. Its function is as follows. Exhibits a very high intrinsic GTPase hydrolysis rate. Involved in the addition of a carboxymethylaminomethyl (cmnm) group at the wobble position (U34) of certain tRNAs, forming tRNA-cmnm(5)s(2)U34. In Cereibacter sphaeroides (strain ATCC 17029 / ATH 2.4.9) (Rhodobacter sphaeroides), this protein is tRNA modification GTPase MnmE.